Here is a 462-residue protein sequence, read N- to C-terminus: Neuronal acetylcholine receptor subunit non-alpha-2 (462 aa).

A signal peptide spans 1-30 (MTLAVIGLFTLFTSIIAITPAREFVSLAER). Topologically, residues 31–234 (EDALLRELFQ…ITYSFILKRL (204 aa)) are extracellular. N-linked (GlcNAc...) asparagine glycosylation is found at N53 and N168. C155 and C169 are joined by a disulfide. The next 3 helical transmembrane spans lie at 235 to 259 (PLFY…VFYL), 267 to 284 (VSLS…LLVI), and 301 to 322 (YLLF…VINV). Topologically, residues 323-428 (HHRSSATYHP…WKFVAQVLDR (106 aa)) are cytoplasmic. The segment covering 362–372 (ELEPHSPDLKP) has biased composition (basic and acidic residues). The segment at 362 to 384 (ELEPHSPDLKPRNKKGPPGPEGE) is disordered. The helical transmembrane segment at 429-446 (IFLWTFLTVSVLGTILIF) threads the bilayer.

The protein belongs to the ligand-gated ion channel (TC 1.A.9) family. Acetylcholine receptor (TC 1.A.9.1) subfamily. As to quaternary structure, neuronal AChR seems to be composed of two different type of subunits: alpha and beta.

Its subcellular location is the postsynaptic cell membrane. It is found in the cell membrane. After binding acetylcholine, the AChR responds by an extensive change in conformation that affects all subunits and leads to opening of an ion-conducting channel across the plasma membrane. In Carassius auratus (Goldfish), this protein is Neuronal acetylcholine receptor subunit non-alpha-2.